Here is a 491-residue protein sequence, read N- to C-terminus: Glucose-6-phosphate 1-dehydrogenase (491 aa).

Residues R51 and K150 each contribute to the NADP(+) site. Residues H180, K184, E218, and D237 each coordinate substrate. H242 functions as the Proton acceptor in the catalytic mechanism. Position 341 (K341) interacts with substrate.

The protein belongs to the glucose-6-phosphate dehydrogenase family.

The enzyme catalyses D-glucose 6-phosphate + NADP(+) = 6-phospho-D-glucono-1,5-lactone + NADPH + H(+). The protein operates within carbohydrate degradation; pentose phosphate pathway; D-ribulose 5-phosphate from D-glucose 6-phosphate (oxidative stage): step 1/3. Its function is as follows. Catalyzes the oxidation of glucose 6-phosphate to 6-phosphogluconolactone. This chain is Glucose-6-phosphate 1-dehydrogenase, found in Rhizobium meliloti (strain 1021) (Ensifer meliloti).